The chain runs to 381 residues: MKILIDENMPYAQALFSQLGEVILKPGRTLTADDLIDVDALMIRSVTKVNDALLAKANRLKFVGTATAGMDHVDQALLRERGIFFTAAPGCNKVGVAEYVFSVLMVLAQQQGFSVFDKTVGIIGAGQVGSYLAKCLSGIGMKVLLNDPPKQAQGDEREFTELETLLKQADVITLHTPITRGGEWPTHHLIDAAILEQLRSDQILINAARGPVVDNAALKARLQQGDGFTAVLDVFEFEPQVDMELLPLLAFATPHIAGYGLEGKARGTTMIFNSYCEFLGSAHCANPASLLPKAPVPKVYLERAWDEETLRTLTQIIYDVRKDDAQFRREIHQPGAFDLMRKHYWDRREYSAVTLAGGADCHLAPLAKLGFQVEVCDEPTI.

Substrate-binding residues include Ser-45 and Thr-67. NAD(+) is bound by residues 127–128 (QV), Asp-147, and Thr-176. Arg-209 is a catalytic residue. Asp-233 is an NAD(+) binding site. Residue Glu-238 is part of the active site. The active-site Proton donor is the His-255. Residue Gly-258 participates in NAD(+) binding. Tyr-259 contributes to the substrate binding site.

It belongs to the D-isomer specific 2-hydroxyacid dehydrogenase family. PdxB subfamily. As to quaternary structure, homodimer.

It is found in the cytoplasm. It carries out the reaction 4-phospho-D-erythronate + NAD(+) = (R)-3-hydroxy-2-oxo-4-phosphooxybutanoate + NADH + H(+). Its pathway is cofactor biosynthesis; pyridoxine 5'-phosphate biosynthesis; pyridoxine 5'-phosphate from D-erythrose 4-phosphate: step 2/5. Its function is as follows. Catalyzes the oxidation of erythronate-4-phosphate to 3-hydroxy-2-oxo-4-phosphonooxybutanoate. This is Erythronate-4-phosphate dehydrogenase from Vibrio cholerae serotype O1 (strain ATCC 39315 / El Tor Inaba N16961).